The following is a 353-amino-acid chain: Nicotinate-nucleotide--dimethylbenzimidazole phosphoribosyltransferase (353 aa).

Glu319 serves as the catalytic Proton acceptor.

Belongs to the CobT family.

It catalyses the reaction 5,6-dimethylbenzimidazole + nicotinate beta-D-ribonucleotide = alpha-ribazole 5'-phosphate + nicotinate + H(+). It functions in the pathway nucleoside biosynthesis; alpha-ribazole biosynthesis; alpha-ribazole from 5,6-dimethylbenzimidazole: step 1/2. In terms of biological role, catalyzes the synthesis of alpha-ribazole-5'-phosphate from nicotinate mononucleotide (NAMN) and 5,6-dimethylbenzimidazole (DMB). The polypeptide is Nicotinate-nucleotide--dimethylbenzimidazole phosphoribosyltransferase (Chlorobaculum parvum (strain DSM 263 / NCIMB 8327) (Chlorobium vibrioforme subsp. thiosulfatophilum)).